Consider the following 482-residue polypeptide: MSPQTETKASVGFKAGVKDYKLTYYTPEYQTLDTDILAAFRVTPQPGVPPEEAGAAVAAESSTGTWTTVWTDGLTSLDRYKGRCYHIDPVPGEENQYICYVAYPLDLFEEGSVTNMFTSIVGNVFGFKALRALRLEDLRIPVAYIKTFQGPPHGIQVERDKLNKYGRPLLGCTIKPKLGLSAKNYGRAVYECLRGGLDFTKDDENVNSQPFMRWRDRFLFCAEALYKAQAETGEIKGHYLNATAGTCEEMIKRAVFARELGVPIVMHDYLTGGFTANTSLAHYCRDNGLLLHIHRAMHAVIDRQKNHGMHFRVLAKALRLSGGDHIHAGTVVGKLEGERDITLGFVDLLRDDYTEIDANRGIYFTQSWVSTPGVLPVASGGIHVWHMPALTEIFGDDSVLQFGGGTLGHPWGNAPGAVANRVALEACVQARNEGRDLAREGNTIIREASKWSPELAAACEVWKEIKFEFPAVDTLDKDKKKG.

Positions 1–2 (MS) are excised as a propeptide. Position 3 is an N-acetylproline (P3). N6,N6,N6-trimethyllysine is present on K14. 2 residues coordinate substrate: N123 and T173. K175 serves as the catalytic Proton acceptor. K177 contributes to the substrate binding site. Mg(2+)-binding residues include K201, D203, and E204. N6-carboxylysine is present on K201. Catalysis depends on H294, which acts as the Proton acceptor. Substrate is bound by residues R295, H327, and S379.

It belongs to the RuBisCO large chain family. Type I subfamily. In terms of assembly, heterohexadecamer of 8 large chains and 8 small chains; disulfide-linked. The disulfide link is formed within the large subunit homodimers. Requires Mg(2+) as cofactor. Post-translationally, the disulfide bond which can form in the large chain dimeric partners within the hexadecamer appears to be associated with oxidative stress and protein turnover.

It localises to the plastid. Its subcellular location is the chloroplast. The enzyme catalyses 2 (2R)-3-phosphoglycerate + 2 H(+) = D-ribulose 1,5-bisphosphate + CO2 + H2O. The catalysed reaction is D-ribulose 1,5-bisphosphate + O2 = 2-phosphoglycolate + (2R)-3-phosphoglycerate + 2 H(+). Functionally, ruBisCO catalyzes two reactions: the carboxylation of D-ribulose 1,5-bisphosphate, the primary event in carbon dioxide fixation, as well as the oxidative fragmentation of the pentose substrate in the photorespiration process. Both reactions occur simultaneously and in competition at the same active site. In Stegnosperma halimifolium, this protein is Ribulose bisphosphate carboxylase large chain.